A 380-amino-acid chain; its full sequence is Ribosomal RNA large subunit methyltransferase G (380 aa).

It belongs to the methyltransferase superfamily. RlmG family.

It localises to the cytoplasm. The enzyme catalyses guanosine(1835) in 23S rRNA + S-adenosyl-L-methionine = N(2)-methylguanosine(1835) in 23S rRNA + S-adenosyl-L-homocysteine + H(+). Its function is as follows. Specifically methylates the guanine in position 1835 (m2G1835) of 23S rRNA. The protein is Ribosomal RNA large subunit methyltransferase G of Streptomyces avermitilis (strain ATCC 31267 / DSM 46492 / JCM 5070 / NBRC 14893 / NCIMB 12804 / NRRL 8165 / MA-4680).